The sequence spans 352 residues: Heat-inducible transcription repressor HrcA (352 aa).

Belongs to the HrcA family.

Its function is as follows. Negative regulator of class I heat shock genes (grpE-dnaK-dnaJ and groELS operons). Prevents heat-shock induction of these operons. This is Heat-inducible transcription repressor HrcA from Latilactobacillus sakei (Lactobacillus sakei).